The sequence spans 427 residues: Glutamate-1-semialdehyde 2,1-aminomutase (427 aa).

K265 is subject to N6-(pyridoxal phosphate)lysine.

It belongs to the class-III pyridoxal-phosphate-dependent aminotransferase family. HemL subfamily. Homodimer. Pyridoxal 5'-phosphate serves as cofactor.

It localises to the cytoplasm. It catalyses the reaction (S)-4-amino-5-oxopentanoate = 5-aminolevulinate. It functions in the pathway porphyrin-containing compound metabolism; protoporphyrin-IX biosynthesis; 5-aminolevulinate from L-glutamyl-tRNA(Glu): step 2/2. The protein is Glutamate-1-semialdehyde 2,1-aminomutase of Pseudomonas putida (strain W619).